Here is a 488-residue protein sequence, read N- to C-terminus: Putative BTB/POZ domain-containing protein L674 (488 aa).

The 68-residue stretch at 83 to 150 (NIVYFNIGGK…VKNQKCPINN (68 aa)) folds into the BTB domain.

It belongs to the mimivirus BTB/WD family.

The protein is Putative BTB/POZ domain-containing protein L674 of Acanthamoeba polyphaga (Amoeba).